A 236-amino-acid polypeptide reads, in one-letter code: Orotidine 5'-phosphate decarboxylase (236 aa).

Substrate is bound by residues Asp13, Lys35, 62 to 71 (DLKFYDIPQT), Thr123, Arg184, Gln193, Gly213, and Arg214. The active-site Proton donor is the Lys64.

This sequence belongs to the OMP decarboxylase family. Type 1 subfamily. In terms of assembly, homodimer.

The enzyme catalyses orotidine 5'-phosphate + H(+) = UMP + CO2. Its pathway is pyrimidine metabolism; UMP biosynthesis via de novo pathway; UMP from orotate: step 2/2. Functionally, catalyzes the decarboxylation of orotidine 5'-monophosphate (OMP) to uridine 5'-monophosphate (UMP). The chain is Orotidine 5'-phosphate decarboxylase from Coxiella burnetii (strain CbuK_Q154) (Coxiella burnetii (strain Q154)).